A 508-amino-acid chain; its full sequence is Photosystem II CP47 reaction center protein (508 aa).

Helical transmembrane passes span 21–36 (SVHL…WAGS), 101–115 (IILS…IWHW), 140–156 (GVHL…FGVF), 203–218 (IAAG…FHVL), 237–252 (VLSS…AFVV), and 457–472 (SFAL…HGAR).

It belongs to the PsbB/PsbC family. PsbB subfamily. PSII is composed of 1 copy each of membrane proteins PsbA, PsbB, PsbC, PsbD, PsbE, PsbF, PsbH, PsbI, PsbJ, PsbK, PsbL, PsbM, PsbT, PsbY, PsbZ, Psb30/Ycf12, at least 3 peripheral proteins of the oxygen-evolving complex and a large number of cofactors. It forms dimeric complexes. Binds multiple chlorophylls. PSII binds additional chlorophylls, carotenoids and specific lipids. serves as cofactor.

Its subcellular location is the plastid. The protein resides in the chloroplast thylakoid membrane. Functionally, one of the components of the core complex of photosystem II (PSII). It binds chlorophyll and helps catalyze the primary light-induced photochemical processes of PSII. PSII is a light-driven water:plastoquinone oxidoreductase, using light energy to abstract electrons from H(2)O, generating O(2) and a proton gradient subsequently used for ATP formation. The chain is Photosystem II CP47 reaction center protein from Euglena gracilis.